Consider the following 221-residue polypeptide: NADH-ubiquinone oxidoreductase chain 4 (221 aa).

5 consecutive transmembrane segments (helical) span residues Ala20–Met40, Leu45–Leu65, Leu78–Leu98, Ile121–Ala141, and Phe170–Cys190.

The protein belongs to the complex I subunit 4 family.

The protein resides in the mitochondrion membrane. The catalysed reaction is a ubiquinone + NADH + 5 H(+)(in) = a ubiquinol + NAD(+) + 4 H(+)(out). Core subunit of the mitochondrial membrane respiratory chain NADH dehydrogenase (Complex I) that is believed to belong to the minimal assembly required for catalysis. Complex I functions in the transfer of electrons from NADH to the respiratory chain. The immediate electron acceptor for the enzyme is believed to be ubiquinone. In Anopheles arabiensis (Mosquito), this protein is NADH-ubiquinone oxidoreductase chain 4 (ND4).